The primary structure comprises 329 residues: Probable fructokinase-2 (329 aa).

This sequence belongs to the carbohydrate kinase PfkB family.

It catalyses the reaction D-fructose + ATP = D-fructose 6-phosphate + ADP + H(+). Its pathway is glycan biosynthesis; starch biosynthesis. Its function is as follows. May play an important role in maintaining the flux of carbon towards starch formation. In Arabidopsis thaliana (Mouse-ear cress), this protein is Probable fructokinase-2.